Reading from the N-terminus, the 31-residue chain is Nemertide alpha-6 (31 aa).

3 cysteine pairs are disulfide-bonded: Cys2–Cys16, Cys9–Cys20, and Cys15–Cys26. Residues Pro28 and Pro29 each carry the 4-hydroxyproline modification.

The protein belongs to the nemertide family. In terms of tissue distribution, confined to the epidermis and to the mucus layer.

It is found in the secreted. Its function is as follows. Highly potent toxin against both insect and some mammalian sodium channels (Nav). It potently inhibits inactivation of insect sodium channels of B.germanica (BgNav1) (EC(50)=2.6 nM) and also delays the inactivation of mammalian Nav with potent activity on Nav1.1/SCN1A (hNav1.1/SCN1A; EC(50)=7.9 nM, rNav1.2/SCN2A; EC(50)=24.3 nM, rNav1.3/SCN3A; EC(50)=105.6 nM, rNav1.4/SCN4A; EC(50)=46.4 nM, hNav1.5/SCN5A; EC(50)=215.2 nM, mNav1.6/SCN8A; EC(50)=36.3 nM, hNav1.9/SCN9A; EC(50)=97.2 nM). 1 uM is enough to completely inhibits the inactivation, resulting in sustained non-inactivating currents. In addition, the toxin significantly enhances the recovery from inactivation, and the open state is not required for the toxin to interact with the channel. In vivo, injection into brine shrimp (Artemia salina) stops movement or causes death after 24 hours (EC(50)=2.8 uM). This Lineus sanguineus (Ribbon worm) protein is Nemertide alpha-6.